Here is a 556-residue protein sequence, read N- to C-terminus: Formate--tetrahydrofolate ligase (556 aa).

Thr-65 to Thr-72 lines the ATP pocket.

Belongs to the formate--tetrahydrofolate ligase family.

It carries out the reaction (6S)-5,6,7,8-tetrahydrofolate + formate + ATP = (6R)-10-formyltetrahydrofolate + ADP + phosphate. Its pathway is one-carbon metabolism; tetrahydrofolate interconversion. The protein is Formate--tetrahydrofolate ligase of Proteus mirabilis (strain HI4320).